A 504-amino-acid chain; its full sequence is GTPase Obg (504 aa).

Positions 2–159 (SQFVDRVVLH…KDVTLELKSM (158 aa)) constitute an Obg domain. A disordered region spans residues 68–88 (AERGNNGAGDDRHGARGKDLT). The 181-residue stretch at 160–340 (ADVGLVGFPS…LRFALMDIVR (181 aa)) folds into the OBG-type G domain. GTP-binding positions include 166–173 (GFPSAGKS), 191–195 (FTTLA), 212–215 (DVPG), 292–295 (NKMD), and 321–323 (STV). Mg(2+) is bound by residues S173 and T193. The OCT domain maps to 364 to 444 (KRKGRFADFE…IGGITFEWDP (81 aa)). Residues 449–481 (GVDQTPAYGRGKDRRLEQTDRVTAEQRKRASQA) are disordered. Residues 458–476 (RGKDRRLEQTDRVTAEQRK) are compositionally biased toward basic and acidic residues.

It belongs to the TRAFAC class OBG-HflX-like GTPase superfamily. OBG GTPase family. As to quaternary structure, monomer. Requires Mg(2+) as cofactor.

The protein localises to the cytoplasm. In terms of biological role, an essential GTPase which binds GTP, GDP and possibly (p)ppGpp with moderate affinity, with high nucleotide exchange rates and a fairly low GTP hydrolysis rate. Plays a role in control of the cell cycle, stress response, ribosome biogenesis and in those bacteria that undergo differentiation, in morphogenesis control. In Corynebacterium urealyticum (strain ATCC 43042 / DSM 7109), this protein is GTPase Obg.